A 318-amino-acid polypeptide reads, in one-letter code: GPN-loop GTPase 2 (318 aa).

A GTP-binding site is contributed by 29-34 (GSGKST). Positions 85 to 87 (GPN) match the Gly-Pro-Asn (GPN)-loop; involved in dimer interface motif. 187–190 (SKMD) provides a ligand contact to GTP.

It belongs to the GPN-loop GTPase family. In terms of assembly, heterodimers with gpn1 or gpn3. Binds to RNA polymerase II (RNAPII).

Functionally, small GTPase required for proper localization of RNA polymerase II and III (RNAPII and RNAPIII). May act at an RNAP assembly step prior to nuclear import. The polypeptide is GPN-loop GTPase 2 (Xenopus laevis (African clawed frog)).